The following is a 478-amino-acid chain: Putative indole-3-acetic acid-amido synthetase GH3.10 (478 aa).

Belongs to the IAA-amido conjugating enzyme family.

May catalyze the synthesis of indole-3-acetic acid (IAA)-amino acid conjugates, providing a mechanism for the plant to cope with the presence of excess auxin. The polypeptide is Putative indole-3-acetic acid-amido synthetase GH3.10 (GH3.10) (Oryza sativa subsp. japonica (Rice)).